We begin with the raw amino-acid sequence, 313 residues long: tRNA dimethylallyltransferase 2 (313 aa).

16-23 (GPTASGKT) is a binding site for ATP. 18–23 (TASGKT) is a binding site for substrate. 2 interaction with substrate tRNA regions span residues 41 to 44 (DSRQ) and 161 to 165 (QRTIR).

The protein belongs to the IPP transferase family. As to quaternary structure, monomer. It depends on Mg(2+) as a cofactor.

The enzyme catalyses adenosine(37) in tRNA + dimethylallyl diphosphate = N(6)-dimethylallyladenosine(37) in tRNA + diphosphate. In terms of biological role, catalyzes the transfer of a dimethylallyl group onto the adenine at position 37 in tRNAs that read codons beginning with uridine, leading to the formation of N6-(dimethylallyl)adenosine (i(6)A). The polypeptide is tRNA dimethylallyltransferase 2 (Pelobacter propionicus (strain DSM 2379 / NBRC 103807 / OttBd1)).